A 580-amino-acid chain; its full sequence is CTP synthase (580 aa).

Residues 304–559 (NIILVGKYVS…VAASSGCLDE (256 aa)) form the Glutamine amidotransferase type-1 domain. Residues cysteine 403, histidine 532, and glutamate 534 each act as for GATase activity in the active site.

Belongs to the CTP synthase family.

It catalyses the reaction UTP + L-glutamine + ATP + H2O = CTP + L-glutamate + ADP + phosphate + 2 H(+). It participates in pyrimidine metabolism; CTP biosynthesis via de novo pathway; CTP from UDP: step 2/2. Functionally, catalyzes the ATP-dependent amination of UTP to CTP with either L-glutamine or ammonia as the source of nitrogen. This chain is CTP synthase (URA7), found in Gibberella zeae (strain ATCC MYA-4620 / CBS 123657 / FGSC 9075 / NRRL 31084 / PH-1) (Wheat head blight fungus).